The primary structure comprises 230 residues: Sugar fermentation stimulation protein homolog (230 aa).

Belongs to the SfsA family.

This chain is Sugar fermentation stimulation protein homolog, found in Clostridium botulinum (strain Loch Maree / Type A3).